Here is a 180-residue protein sequence, read N- to C-terminus: Fucolectin-2 (180 aa).

The signal sequence occupies residues 1-22; that stretch reads MKVKMIMLLFQILAILTLKSDS. The interval 31-179 is F5/8 type C-like; it reads QENVALRGRA…VEVNVLFPAP (149 aa). The Ca(2+) site is built by N58, D61, N63, and S72. 3 disulfides stabilise this stretch: C73-C168, C104-C105, and C130-C146. The alpha-L-fucose site is built by H75 and R101. The short motif at 101–103 is the Cell attachment site element; the sequence is RGD. R108 is an alpha-L-fucose binding site. 2 residues coordinate Ca(2+): C168 and E169.

The protein belongs to the fucolectin family. In terms of assembly, homotrimer. As to expression, parenchymal hepatocytes.

It localises to the secreted. It is found in the extracellular space. Its function is as follows. Acts as a defensive agent. Recognizes blood group fucosylated oligosaccharides including A, B, H and Lewis B-type antigens. Does not recognize Lewis A antigen and has low affinity for monovalent haptens. The chain is Fucolectin-2 from Anguilla japonica (Japanese eel).